The chain runs to 619 residues: UvrABC system protein C (619 aa).

In terms of domain architecture, GIY-YIG spans 20 to 98; the sequence is TAPGVYRMYA…IKSLSPRYNV (79 aa). The 36-residue stretch at 207 to 242 folds into the UVR domain; the sequence is DQLGEEIMHSMQQASEALEFERAARLRDLLSSLRSM.

Belongs to the UvrC family. Interacts with UvrB in an incision complex.

Its subcellular location is the cytoplasm. Functionally, the UvrABC repair system catalyzes the recognition and processing of DNA lesions. UvrC both incises the 5' and 3' sides of the lesion. The N-terminal half is responsible for the 3' incision and the C-terminal half is responsible for the 5' incision. The sequence is that of UvrABC system protein C from Xanthomonas axonopodis pv. citri (strain 306).